We begin with the raw amino-acid sequence, 120 residues long: Ribonuclease P protein component 2 (120 aa).

It belongs to the eukaryotic/archaeal RNase P protein component 2 family. In terms of assembly, consists of a catalytic RNA component and at least 4-5 protein subunits.

Its subcellular location is the cytoplasm. It catalyses the reaction Endonucleolytic cleavage of RNA, removing 5'-extranucleotides from tRNA precursor.. Functionally, part of ribonuclease P, a protein complex that generates mature tRNA molecules by cleaving their 5'-ends. In Thermococcus kodakarensis (strain ATCC BAA-918 / JCM 12380 / KOD1) (Pyrococcus kodakaraensis (strain KOD1)), this protein is Ribonuclease P protein component 2.